The sequence spans 404 residues: L-cysteine:1D-myo-inositol 2-amino-2-deoxy-alpha-D-glucopyranoside ligase 1 (404 aa).

Cysteine 47 is a Zn(2+) binding site. Residues 47–50 (CGIT), threonine 62, and 85–87 (NIT) each bind L-cysteinyl-5'-AMP. The 'HIGH' region signature appears at 49–59 (ITPYDSTHLGH). The 'ERGGDP' region signature appears at 188-193 (ERGGDP). Tryptophan 228 is a binding site for L-cysteinyl-5'-AMP. A Zn(2+)-binding site is contributed by cysteine 232. Residue 250–252 (GSD) coordinates L-cysteinyl-5'-AMP. Histidine 257 contacts Zn(2+). Isoleucine 284 serves as a coordination point for L-cysteinyl-5'-AMP. A 'KMSKS' region motif is present at residues 290-294 (KMSKS).

Belongs to the class-I aminoacyl-tRNA synthetase family. MshC subfamily. As to quaternary structure, monomer. Zn(2+) is required as a cofactor.

The enzyme catalyses 1D-myo-inositol 2-amino-2-deoxy-alpha-D-glucopyranoside + L-cysteine + ATP = 1D-myo-inositol 2-(L-cysteinylamino)-2-deoxy-alpha-D-glucopyranoside + AMP + diphosphate + H(+). In terms of biological role, catalyzes the ATP-dependent condensation of GlcN-Ins and L-cysteine to form L-Cys-GlcN-Ins. The polypeptide is L-cysteine:1D-myo-inositol 2-amino-2-deoxy-alpha-D-glucopyranoside ligase 1 (Corynebacterium urealyticum (strain ATCC 43042 / DSM 7109)).